Here is a 375-residue protein sequence, read N- to C-terminus: Mitogen-activated protein kinase 1 (375 aa).

In terms of domain architecture, Protein kinase spans 43–329; it reads RPPIMPIGRG…VEEALAHPYL (287 aa). ATP-binding positions include 49-57 and Lys-72; that span reads IGRGAYGIV. Asp-169 functions as the Proton acceptor in the catalytic mechanism. Position 201 is a phosphothreonine (Thr-201). A TXY motif is present at residues 201-203; sequence TEY. Phosphotyrosine is present on Tyr-203. Position 206 is a phosphothreonine (Thr-206).

The protein belongs to the protein kinase superfamily. CMGC Ser/Thr protein kinase family. MAP kinase subfamily. It depends on Mg(2+) as a cofactor. Activated by wounding and UV-C in a cultivar-dependent manner; phosphorylated in cv. Pungchon but not in cv. Subicho.

It catalyses the reaction L-seryl-[protein] + ATP = O-phospho-L-seryl-[protein] + ADP + H(+). The enzyme catalyses L-threonyl-[protein] + ATP = O-phospho-L-threonyl-[protein] + ADP + H(+). Activated by threonine and tyrosine phosphorylation. Functionally, stress-inducible protein kinase involved in oxidative stress-mediated and innate immune MAP kinase signaling cascades. In Capsicum annuum (Capsicum pepper), this protein is Mitogen-activated protein kinase 1.